The following is a 309-amino-acid chain: Dicarboxylate carrier UCP2 (309 aa).

The Mitochondrial intermembrane portion of the chain corresponds to methionine 1–lysine 16. Solcar repeat units lie at residues proline 11 to phenylalanine 106, alanine 114 to alanine 203, and aspartate 212 to alanine 297. The tract at residues lysine 16–methionine 63 is important for interaction with long-chain fatty acids. Residues phenylalanine 17–arginine 40 form a helical membrane-spanning segment. Over leucine 41–serine 77 the chain is Mitochondrial matrix. Residues leucine 78 to valine 103 form a helical membrane-spanning segment. The Mitochondrial intermembrane segment spans residues lysine 104–arginine 119. The chain crosses the membrane as a helical span at residues leucine 120–glutamine 145. Residues alanine 146–arginine 173 are Mitochondrial matrix-facing. Residues glycine 174–leucine 199 form a helical membrane-spanning segment. Residues isoleucine 200–histidine 217 are Mitochondrial intermembrane-facing. A helical membrane pass occupies residues phenylalanine 218–tyrosine 242. At methionine 243–alanine 268 the chain is on the mitochondrial matrix side. A helical transmembrane segment spans residues phenylalanine 269–leucine 294. Positions leucine 278–valine 285 are important for interaction with long-chain fatty acids. The Mitochondrial intermembrane portion of the chain corresponds to lysine 295–phenylalanine 309.

The protein belongs to the mitochondrial carrier (TC 2.A.29) family. As to quaternary structure, homotetramer. Adopts an asymmetrical dimer of dimers functional form. Interacts with MICU1 (when methylated); leading to decrease the calcium sensitivity of MICU1.

It localises to the mitochondrion inner membrane. It carries out the reaction L-aspartate(out) + phosphate(in) + H(+)(in) = L-aspartate(in) + phosphate(out) + H(+)(out). It catalyses the reaction oxaloacetate(out) + phosphate(in) + H(+)(in) = oxaloacetate(in) + phosphate(out) + H(+)(out). The catalysed reaction is (S)-malate(out) + phosphate(in) + H(+)(in) = (S)-malate(in) + phosphate(out) + H(+)(out). The enzyme catalyses malonate(out) + phosphate(in) + H(+)(in) = malonate(in) + phosphate(out) + H(+)(out). It carries out the reaction sulfate(out) + phosphate(in) + H(+)(in) = sulfate(in) + phosphate(out) + H(+)(out). It catalyses the reaction (S)-malate(out) = (S)-malate(in). The catalysed reaction is L-aspartate(out) = L-aspartate(in). The enzyme catalyses phosphate(in) = phosphate(out). It carries out the reaction chloride(in) = chloride(out). It catalyses the reaction H(+)(in) = H(+)(out). The catalysed reaction is a long-chain fatty acid(out) = a long-chain fatty acid(in). Functionally, antiporter that exports dicarboxylate intermediates of the Krebs cycle in exchange for phosphate plus a proton across the inner membrane of mitochondria, a process driven by mitochondrial motive force with an overall impact on glycolysis, glutaminolysis and glutathione-dependent redox balance. Continuous export of oxaloacetate and related four-carbon dicarboxylates from mitochondrial matrix into the cytosol negatively regulates the oxidation of acetyl-CoA substrates via the Krebs cycle lowering the ATP/ADP ratio and reactive oxygen species (ROS) production. May mediate inducible proton entry into the mitochondrial matrix affecting ATP turnover as a protection mechanism against oxidative stress. The proton currents are most likely associated with fatty acid flipping across the inner membrane of mitochondria in a metabolic process regulated by free fatty acids and purine nucleotides. Regulates the use of glucose as a source of energy. Required for glucose-induced DRP1-dependent mitochondrial fission and neuron activation in the ventromedial nucleus of the hypothalamus (VMH). This mitochondrial adaptation mechanism modulates the VMH pool of glucose-excited neurons with an impact on systemic glucose homeostasis. Regulates ROS levels and metabolic reprogramming of macrophages during the resolution phase of inflammation. Attenuates ROS production in response to IL33 to preserve the integrity of the Krebs cycle required for persistent production of itaconate and subsequent GATA3-dependent differentiation of inflammation-resolving alternatively activated macrophages. Can unidirectionally transport anions including L-malate, L-aspartate, phosphate and chloride ions. Does not mediate adaptive thermogenesis. The sequence is that of Dicarboxylate carrier UCP2 (UCP2) from Pongo abelii (Sumatran orangutan).